Reading from the N-terminus, the 81-residue chain is Insulin-like growth factor 1 (81 aa).

Residues 1–4 constitute a propeptide that is removed on maturation; sequence FASA. The b stretch occupies residues 5–33; the sequence is GPETLCGAELVDALQFVCGDRGFYFNKPT. Cystine bridges form between Cys10/Cys52, Cys22/Cys65, and Cys51/Cys56. Positions 34 to 45 are c; sequence GYGSSSRRAPQT. An a region spans residues 46-66; the sequence is GIVDECCFRSCDLRRLEMYCA. The segment at 67–74 is d; it reads PLKPAKAA. The propeptide at 75-81 is e peptide; the sequence is RSVRAQR.

This sequence belongs to the insulin family. As to quaternary structure, forms a ternary complex with IGFR1 and ITGAV:ITGB3. Forms a ternary complex with IGFR1 and ITGA6:ITGB4.

It localises to the secreted. The insulin-like growth factors, isolated from plasma, are structurally and functionally related to insulin but have a much higher growth-promoting activity. May be a physiological regulator of [1-14C]-2-deoxy-D-glucose (2DG) transport and glycogen synthesis in osteoblasts. Stimulates glucose transport in bone-derived osteoblastic (PyMS) cells and is effective at much lower concentrations than insulin, not only regarding glycogen and DNA synthesis but also with regard to enhancing glucose uptake. May play a role in synapse maturation. Ca(2+)-dependent exocytosis of IGF1 is required for sensory perception of smell in the olfactory bulb. Acts as a ligand for IGF1R. Binds to the alpha subunit of IGF1R, leading to the activation of the intrinsic tyrosine kinase activity which autophosphorylates tyrosine residues in the beta subunit thus initiating a cascade of down-stream signaling events leading to activation of the PI3K-AKT/PKB and the Ras-MAPK pathways. Binds to integrins ITGAV:ITGB3 and ITGA6:ITGB4. Its binding to integrins and subsequent ternary complex formation with integrins and IGFR1 are essential for IGF1 signaling. Induces the phosphorylation and activation of IGFR1, MAPK3/ERK1, MAPK1/ERK2 and AKT1. As part of the MAPK/ERK signaling pathway, acts as a negative regulator of apoptosis in cardiomyocytes via promotion of STUB1/CHIP-mediated ubiquitination and degradation of ICER-type isoforms of CREM. This chain is Insulin-like growth factor 1, found in Suncus murinus (Asian house shrew).